The primary structure comprises 446 residues: Maltoporin (446 aa).

Positions 1–25 (MMITLRKLPLAVAVAAGVMSAQAMA) are cleaved as a signal peptide.

Belongs to the porin LamB (TC 1.B.3) family. Homotrimer formed of three 18-stranded antiparallel beta-barrels, containing three independent channels.

Its subcellular location is the cell outer membrane. The catalysed reaction is beta-maltose(in) = beta-maltose(out). Functionally, involved in the transport of maltose and maltodextrins. In Escherichia coli (strain SE11), this protein is Maltoporin.